We begin with the raw amino-acid sequence, 68 residues long: DNA-directed RNA polymerase subunit Rpo10 (68 aa).

Zn(2+) is bound by residues C7, C10, C44, and C45.

Belongs to the archaeal Rpo10/eukaryotic RPB10 RNA polymerase subunit family. As to quaternary structure, part of the RNA polymerase complex. Zn(2+) is required as a cofactor.

It localises to the cytoplasm. The catalysed reaction is RNA(n) + a ribonucleoside 5'-triphosphate = RNA(n+1) + diphosphate. Its function is as follows. DNA-dependent RNA polymerase (RNAP) catalyzes the transcription of DNA into RNA using the four ribonucleoside triphosphates as substrates. In Methanococcus maripaludis (strain C6 / ATCC BAA-1332), this protein is DNA-directed RNA polymerase subunit Rpo10.